A 447-amino-acid chain; its full sequence is Acidic leucine-rich nuclear phosphoprotein 32-related protein (447 aa).

LRR repeat units follow at residues 49–70 (NLQHLSVANIGVSSLEQFPRLG), 71–90 (NLQKLILSDNRITVGLEFLV), and 96–117 (SFCDLDLSNNRIQFVEDLAPLA). Positions 129–167 (CPVTRLKDYRSRVFGLIKTLKYLDKTDAEGNERPESDDE) constitute an LRRCT domain. Residues 155–447 (DAEGNERPES…EDDDDDDEER (293 aa)) are disordered. Composition is skewed to acidic residues over residues 163–194 (ESDDEDDEEDEEDEEEEEEGDEEDPGSGEIDG) and 215–231 (VDVDEDEESDAEDDESE). Residues 232-242 (QATGVNGTSYR) show a composition bias toward polar residues. Composition is skewed to acidic residues over residues 256 to 277 (VREDDGDDSESGEEEVGEDNDV), 284 to 309 (EDSENEEDGVDDEEDDEEDEEEEEVD), 336 to 374 (GDDDEDGDGETGEDDQGVEDDGEFADEDDDVEEEDEESG), 397 to 415 (PINEDNDPDEEEEVEDDLP), and 433 to 447 (DDDDGEDDDDDDEER).

It belongs to the ANP32 family.

The chain is Acidic leucine-rich nuclear phosphoprotein 32-related protein from Arabidopsis thaliana (Mouse-ear cress).